A 522-amino-acid chain; its full sequence is Lysine--tRNA ligase (522 aa).

A 'HIGH' region motif is present at residues 44–52 (PSGLPHIGT). The 'KMSKS' region motif lies at 290–294 (KISKS). Position 293 (K293) interacts with ATP.

This sequence belongs to the class-I aminoacyl-tRNA synthetase family.

It is found in the cytoplasm. It catalyses the reaction tRNA(Lys) + L-lysine + ATP = L-lysyl-tRNA(Lys) + AMP + diphosphate. The polypeptide is Lysine--tRNA ligase (Rickettsia rickettsii (strain Iowa)).